A 184-amino-acid chain; its full sequence is MKIAQEIRAGNVIMHGKDPMIVLKTEYARGGRGAATVRMKLKALLNNMGTEVVFKADDKIDNVILDKKECTYSYFADPMYVCMDAEYNQYEVEAENMGDALNYLEDGMAVEVVFYDGKAISVELPTSVEREITWTEPAVKGDTSGKVLKPAKIATGFEVAVPLFVNQGDRIEIDTRTGEYRKRV.

Belongs to the elongation factor P family.

Its subcellular location is the cytoplasm. It participates in protein biosynthesis; polypeptide chain elongation. Involved in peptide bond synthesis. Stimulates efficient translation and peptide-bond synthesis on native or reconstituted 70S ribosomes in vitro. Probably functions indirectly by altering the affinity of the ribosome for aminoacyl-tRNA, thus increasing their reactivity as acceptors for peptidyl transferase. This Paracidovorax citrulli (strain AAC00-1) (Acidovorax citrulli) protein is Elongation factor P.